The primary structure comprises 909 residues: MANEQKTAAKDVFQARKTFTTNGKTYHYYSLKALEDSGIGKVSKLPYSIKVLLESVLRQVDGFVIKKEHVENLAKWGTAELKDIDVPFKPSRVILQDFTGVPAVVDLASLRKAMAAVGGDPDKINPEIPVDLVIDHSVQVDKAGTEDALAVNMDLEFERNAERYKFLSWAKKAFNNYQAVPPATGIVHQVNLEFLASVVHAIEEDGELVTYPDTLVGTDSHTTMINGIGVLGWGVGGIEAEAGMLGQPSYFPVPEVIGAKLVGKLPNGTTATDLALKVTQVLREKGVVGKFVEFFGPGIAELPLADRATIANMAPEYGATCGFFPVDEEALNYLRLTGRDPEHIDVVEAYCRSNGLFYTPDAEDPQFTDVVEIDLSQIEANLSGPKRPQDLIPLSAMQETFKKQLVSPAGNQGFGLNAEEENKEIKFKLLNGEETVMKTGAIAIAAITSCTNTSNPYVLIGAGLVAKKAVELGLKVPNYVKTSLAPGSKVVTGYLVNSGLLPYMKELGFNLVGYGCTTCIGNSGPLSPEIEEAVAKNDLLITSVLSGNRNFEGRIHPLVKGNYLASPPLVVAYALAGTVNINLKTDPIGVGKDGQNVYFNDIWPSMDEINALVKQTVTPELFRKEYETVFDDNKRWNEIETTDEALYKWDNDSTYIQNPPFFEEMSVEPGKVEPLKGLRVVGKFGDSVTTDHISPAGAIGKDTPAGKYLQEKGVSPRDFNSYGSRRGNHEVMMRGTFANIRIKNQIAPGTEGGFTTYWPTGEVTSIYDACMKYKEDKTGLVVLAGKDYGMGSSRDWAAKGTNLLGIRTVIAESFERIHRSNLVFMGVLPLQFKQGENADTLGLTGKEVIEVDVDETVRPRDLVTVRAINEDGNVTTFEAVVRFDSEVEIDYYRHGGILQMVLREKMKQS.

[4Fe-4S] cluster-binding residues include C450, C516, and C519.

The protein belongs to the aconitase/IPM isomerase family. Monomer. Requires [4Fe-4S] cluster as cofactor.

The catalysed reaction is citrate = D-threo-isocitrate. It carries out the reaction 3-hydroxybutane-1,2,3-tricarboxylate = 2-methyl-cis-aconitate + H2O. It functions in the pathway carbohydrate metabolism; tricarboxylic acid cycle; isocitrate from oxaloacetate: step 2/2. Functionally, involved in both the tricarboxylic acid (TCA) and methylcitric acid cycles. Catalyzes the reversible isomerization of citrate to isocitrate via cis-aconitate. Also catalyzes the rehydration of 2-methyl-cis-aconitate to produce 2-methylisocitrate. The apo form of AcnA functions as a RNA-binding regulatory protein which plays a role in the regulation of citrate concentration and in the sporulation. To prevent the accumulation of excessive levels of citrate, it binds near the 5' end of the citZ mRNA, decreasing its stability and thereby limiting the concentration of citrate synthase in the cell. Aconitase also binds to the gerE transcript late in sporulation and stabilizes it for translation, thereby increasing the rate and level of GerE protein accumulation. This chain is Aconitate hydratase A (citB), found in Bacillus subtilis (strain 168).